Here is a 553-residue protein sequence, read N- to C-terminus: Arginine--tRNA ligase (553 aa).

The 'HIGH' region motif lies at 130–140 (ANPTGPIHLGG).

It belongs to the class-I aminoacyl-tRNA synthetase family. In terms of assembly, monomer.

It localises to the cytoplasm. The catalysed reaction is tRNA(Arg) + L-arginine + ATP = L-arginyl-tRNA(Arg) + AMP + diphosphate. The protein is Arginine--tRNA ligase of Corynebacterium aurimucosum (strain ATCC 700975 / DSM 44827 / CIP 107346 / CN-1) (Corynebacterium nigricans).